A 318-amino-acid chain; its full sequence is Probable mitochondrial 2-oxoglutarate/malate carrier protein (318 aa).

3 Solcar repeats span residues Q22–I111, L119–L210, and D219–L309. 6 consecutive transmembrane segments (helical) span residues F28–L48, G79–T99, I125–T145, G185–D205, L225–I245, and F281–I301.

This sequence belongs to the mitochondrial carrier (TC 2.A.29) family.

The protein resides in the mitochondrion inner membrane. Its function is as follows. Mitochondrial solute carriers shuttle metabolites, nucleotides, and cofactors through the mitochondrial inner membrane. Catalyzes the transport of 2-oxoglutarate across the inner mitochondrial membrane in an electroneutral exchange for malate or other dicarboxylic acids, and plays an important role in several metabolic processes, including the malate-aspartate shuttle, the oxoglutarate/isocitrate shuttle, in gluconeogenesis from lactate, and in nitrogen metabolism. This is Probable mitochondrial 2-oxoglutarate/malate carrier protein (ucpC) from Dictyostelium discoideum (Social amoeba).